The following is an 80-amino-acid chain: Large ribosomal subunit protein uL24 (80 aa).

The protein belongs to the universal ribosomal protein uL24 family. Part of the 50S ribosomal subunit.

One of two assembly initiator proteins, it binds directly to the 5'-end of the 23S rRNA, where it nucleates assembly of the 50S subunit. Functionally, one of the proteins that surrounds the polypeptide exit tunnel on the outside of the subunit. In Chlorobaculum tepidum (strain ATCC 49652 / DSM 12025 / NBRC 103806 / TLS) (Chlorobium tepidum), this protein is Large ribosomal subunit protein uL24.